A 127-amino-acid polypeptide reads, in one-letter code: MEIFGNVVSGLGEGRFFVGLTPYKNKFKELTGFTPFEGTLNVKLKHNFNLDEFNPIEFDGFEIDGKKYFGGKVLLVKLFDKSGHSINCAIVAPKKTDHSKKTLELIAPVHLRKFLSLNNSDVVKIVI.

10–15 serves as a coordination point for CDP; that stretch reads GLGEGR. 2 residues coordinate Mg(2+): threonine 39 and asparagine 41. FMN is bound by residues threonine 96 and glutamate 104. 109 to 112 contributes to the CDP binding site; that stretch reads VHLR.

The protein belongs to the archaeal riboflavin kinase family. Mg(2+) serves as cofactor.

The catalysed reaction is riboflavin + CTP = CDP + FMN + H(+). It participates in cofactor biosynthesis; FMN biosynthesis; FMN from riboflavin (CTP route): step 1/1. Catalyzes the CTP-dependent phosphorylation of riboflavin (vitamin B2) to form flavin mononucleotide (FMN). The polypeptide is Riboflavin kinase (Methanococcus maripaludis (strain C7 / ATCC BAA-1331)).